We begin with the raw amino-acid sequence, 601 residues long: Elongation factor 4 (601 aa).

In terms of domain architecture, tr-type G spans 6–188 (KNIRNFSIIA…QIIKKIPAPD (183 aa)). GTP contacts are provided by residues 18–23 (DHGKST) and 135–138 (NKID).

The protein belongs to the TRAFAC class translation factor GTPase superfamily. Classic translation factor GTPase family. LepA subfamily.

The protein localises to the cell membrane. The catalysed reaction is GTP + H2O = GDP + phosphate + H(+). Functionally, required for accurate and efficient protein synthesis under certain stress conditions. May act as a fidelity factor of the translation reaction, by catalyzing a one-codon backward translocation of tRNAs on improperly translocated ribosomes. Back-translocation proceeds from a post-translocation (POST) complex to a pre-translocation (PRE) complex, thus giving elongation factor G a second chance to translocate the tRNAs correctly. Binds to ribosomes in a GTP-dependent manner. This Buchnera aphidicola subsp. Schizaphis graminum (strain Sg) protein is Elongation factor 4.